A 2242-amino-acid polypeptide reads, in one-letter code: DEP domain-containing protein DDB_G0279099 (2242 aa).

Disordered regions lie at residues 388–465 (SQNT…SNNS), 576–644 (DSNA…YSRV), 701–730 (PILR…FDQK), 871–965 (DPTT…TKKS), 1077–1194 (QLQL…AFNS), 1287–1336 (GSQQ…MNGS), 1384–1414 (SELL…ALPE), 1446–1471 (AQSS…NTSG), and 1502–1521 (SNNN…NSLN). The stretch at 392–440 (IQNNNNNNNNNNNNNNNNNNNNNNNNNNNNNNNNNNNNNSNNNKNNQNN) forms a coiled coil. Over residues 581-614 (GGNNNNNYNNNNGNGNGHNHNNHNNNNNNNNNND) the composition is skewed to low complexity. Acidic residues predominate over residues 622-631 (EPSDFSDTED). Polar residues-rich tracts occupy residues 632–642 (NSSTTPNSQYS) and 719–729 (HPISPSNSFDQ). A compositionally biased stretch (low complexity) spans 872 to 955 (PTTTTTTGGT…PNSSNTVPNS (84 aa)). A coiled-coil region spans residues 1066–1101 (IPTVENNQHQQQLQLEQQEKEKEKARLAALEKKKPF). A compositionally biased stretch (basic and acidic residues) spans 1082–1106 (QQEKEKEKARLAALEKKKPFPREDS). Low complexity-rich tracts occupy residues 1108–1182 (STLI…ATTA) and 1287–1299 (GSQQ…GSQS). Over residues 1300–1311 (APTSPLTPHKNI) the composition is skewed to polar residues. 3 stretches are compositionally biased toward low complexity: residues 1312-1336 (NTNN…MNGS), 1384-1410 (SELL…GENN), and 1446-1470 (AQSS…TNTS). The 74-residue stretch at 1556 to 1629 (IGIKMTERKY…DGQFYYRLKE (74 aa)) folds into the DEP domain. Residues 1645-1668 (TNNNFNNNNTNSNNNQQQQQQQQS) are compositionally biased toward low complexity. 4 disordered regions span residues 1645-1763 (TNNN…SMSN), 1803-1910 (DEAN…QQQQ), 2122-2145 (NYNN…NLLK), and 2165-2218 (NSDT…KNEM). The span at 1669–1702 (IPSVTSSAVNSPNKDSNTPDHSPISSPKQIGNKL) shows a compositional bias: polar residues. Low complexity-rich tracts occupy residues 1703 to 1760 (SSSS…IQSS) and 1807 to 1848 (GDNN…SSNS). Positions 1791-1821 (LTNKEKDKEKEIDEANGDNNNNNNNNNNNNN) form a coiled coil. Composition is skewed to polar residues over residues 1849–1871 (GQGS…TNPL) and 1879–1889 (YGSSVQNSNQH). Composition is skewed to low complexity over residues 1890–1910 (QQQQ…QQQQ) and 2122–2133 (NYNNNNNNNNNN). Composition is skewed to basic and acidic residues over residues 2166–2181 (SDTE…DNNH) and 2192–2218 (DTDH…KNEM).

In the N-terminal section; belongs to the IML1 family.

The protein is DEP domain-containing protein DDB_G0279099 of Dictyostelium discoideum (Social amoeba).